Reading from the N-terminus, the 306-residue chain is Aspartate carbamoyltransferase catalytic subunit (306 aa).

Residues Arg-54 and Thr-55 each contribute to the carbamoyl phosphate site. An L-aspartate-binding site is contributed by Lys-83. Positions 104, 132, and 135 each coordinate carbamoyl phosphate. Residues Arg-165 and Arg-227 each contribute to the L-aspartate site. Positions 266 and 267 each coordinate carbamoyl phosphate.

The protein belongs to the aspartate/ornithine carbamoyltransferase superfamily. ATCase family. As to quaternary structure, heterododecamer (2C3:3R2) of six catalytic PyrB chains organized as two trimers (C3), and six regulatory PyrI chains organized as three dimers (R2).

The enzyme catalyses carbamoyl phosphate + L-aspartate = N-carbamoyl-L-aspartate + phosphate + H(+). Its pathway is pyrimidine metabolism; UMP biosynthesis via de novo pathway; (S)-dihydroorotate from bicarbonate: step 2/3. Functionally, catalyzes the condensation of carbamoyl phosphate and aspartate to form carbamoyl aspartate and inorganic phosphate, the committed step in the de novo pyrimidine nucleotide biosynthesis pathway. The sequence is that of Aspartate carbamoyltransferase catalytic subunit from Clostridium kluyveri (strain NBRC 12016).